Here is a 545-residue protein sequence, read N- to C-terminus: Lysine--tRNA ligase (545 aa).

The 'HIGH' region signature appears at 33 to 41 (VSGLQHIGR). The 'KMSKS' region motif lies at 288–292 (DMSSS).

The protein belongs to the class-I aminoacyl-tRNA synthetase family.

It is found in the cytoplasm. The catalysed reaction is tRNA(Lys) + L-lysine + ATP = L-lysyl-tRNA(Lys) + AMP + diphosphate. The chain is Lysine--tRNA ligase (lysS) from Aeropyrum pernix (strain ATCC 700893 / DSM 11879 / JCM 9820 / NBRC 100138 / K1).